A 90-amino-acid polypeptide reads, in one-letter code: Small ribosomal subunit protein uS19 (90 aa).

It belongs to the universal ribosomal protein uS19 family.

In terms of biological role, protein S19 forms a complex with S13 that binds strongly to the 16S ribosomal RNA. The chain is Small ribosomal subunit protein uS19 from Methylococcus capsulatus (strain ATCC 33009 / NCIMB 11132 / Bath).